The chain runs to 244 residues: Biosynthetic peptidoglycan transglycosylase (244 aa).

The helical transmembrane segment at 26 to 46 (FLSYFIGLTVALTFLFRFVPI) threads the bilayer.

This sequence belongs to the glycosyltransferase 51 family.

Its subcellular location is the cell inner membrane. The catalysed reaction is [GlcNAc-(1-&gt;4)-Mur2Ac(oyl-L-Ala-gamma-D-Glu-L-Lys-D-Ala-D-Ala)](n)-di-trans,octa-cis-undecaprenyl diphosphate + beta-D-GlcNAc-(1-&gt;4)-Mur2Ac(oyl-L-Ala-gamma-D-Glu-L-Lys-D-Ala-D-Ala)-di-trans,octa-cis-undecaprenyl diphosphate = [GlcNAc-(1-&gt;4)-Mur2Ac(oyl-L-Ala-gamma-D-Glu-L-Lys-D-Ala-D-Ala)](n+1)-di-trans,octa-cis-undecaprenyl diphosphate + di-trans,octa-cis-undecaprenyl diphosphate + H(+). It participates in cell wall biogenesis; peptidoglycan biosynthesis. Functionally, peptidoglycan polymerase that catalyzes glycan chain elongation from lipid-linked precursors. The chain is Biosynthetic peptidoglycan transglycosylase from Mannheimia succiniciproducens (strain KCTC 0769BP / MBEL55E).